The chain runs to 358 residues: Ion-translocating oxidoreductase complex subunit D (358 aa).

The next 3 membrane-spanning stretches (helical) occupy residues 24–44 (ILAMMPAFFTQIYYFGFGVVL), 79–99 (LTALILAMAIPPYAPYWIIII), and 125–145 (IGYVILLISFPLQMTTWMPPI). Thr-186 bears the FMN phosphoryl threonine mark. The next 5 membrane-spanning stretches (helical) occupy residues 220–240 (FAQGWWQINVAFLAGGIFLIL), 248–268 (IPVAMLVTFFCLATATAFTGF), 271–291 (LSAISQLVSGAMMFGAFFIAT), 297–317 (SITPRGKIIFGALVGLFVYLI), and 321–341 (GNYPDGVAFAILLSNICVPLI).

It belongs to the NqrB/RnfD family. The complex is composed of six subunits: RnfA, RnfB, RnfC, RnfD, RnfE and RnfG. FMN is required as a cofactor.

The protein localises to the cell inner membrane. Functionally, part of a membrane-bound complex that couples electron transfer with translocation of ions across the membrane. The sequence is that of Ion-translocating oxidoreductase complex subunit D from Haemophilus influenzae (strain ATCC 51907 / DSM 11121 / KW20 / Rd).